A 165-amino-acid chain; its full sequence is Ribosome maturation factor RimM (165 aa).

The PRC barrel domain maps to 90 to 161; sequence EDEYFIVDLV…LITIRPSGEW (72 aa).

The protein belongs to the RimM family. Binds ribosomal protein uS19.

It is found in the cytoplasm. An accessory protein needed during the final step in the assembly of 30S ribosomal subunit, possibly for assembly of the head region. Essential for efficient processing of 16S rRNA. May be needed both before and after RbfA during the maturation of 16S rRNA. It has affinity for free ribosomal 30S subunits but not for 70S ribosomes. This chain is Ribosome maturation factor RimM, found in Clostridium perfringens (strain ATCC 13124 / DSM 756 / JCM 1290 / NCIMB 6125 / NCTC 8237 / Type A).